Reading from the N-terminus, the 190-residue chain is Adenine phosphoribosyltransferase (190 aa).

The protein belongs to the purine/pyrimidine phosphoribosyltransferase family. In terms of assembly, homodimer.

It is found in the cytoplasm. It carries out the reaction AMP + diphosphate = 5-phospho-alpha-D-ribose 1-diphosphate + adenine. It participates in purine metabolism; AMP biosynthesis via salvage pathway; AMP from adenine: step 1/1. Functionally, catalyzes a salvage reaction resulting in the formation of AMP, that is energically less costly than de novo synthesis. The chain is Adenine phosphoribosyltransferase from Cupriavidus metallidurans (strain ATCC 43123 / DSM 2839 / NBRC 102507 / CH34) (Ralstonia metallidurans).